The sequence spans 78 residues: EEFANTLTLGMRLFGNVYAKEMLMILLVGLGTSGFLGAFGAFLPLIVWQAFGMFIGSLQAFIFAMLAMVYMAHKVEAH.

The next 3 membrane-spanning stretches (helical) occupy residues 13–33 (LFGN…LGTS), 35–55 (FLGA…GMFI), and 57–77 (SLQA…KVEA).

This sequence belongs to the ATPase A chain family. F-type ATPases have 2 components, CF(1) - the catalytic core - and CF(0) - the membrane proton channel. CF(1) has five subunits: alpha(3), beta(3), gamma(1), delta(1), epsilon(1). CF(0) has three main subunits: a(1), b(2) and c(9-12). The alpha and beta chains form an alternating ring which encloses part of the gamma chain. CF(1) is attached to CF(0) by a central stalk formed by the gamma and epsilon chains, while a peripheral stalk is formed by the delta and b chains.

It localises to the cell membrane. Functionally, key component of the proton channel; it plays a direct role in the translocation of protons across the membrane. The chain is ATP synthase subunit a (atpB) from Alkalihalobacillus alcalophilus (Bacillus alcalophilus).